Here is a 151-residue protein sequence, read N- to C-terminus: Ribosome maturation factor RimP (151 aa).

The protein belongs to the RimP family.

The protein localises to the cytoplasm. Its function is as follows. Required for maturation of 30S ribosomal subunits. The chain is Ribosome maturation factor RimP from Pseudoalteromonas translucida (strain TAC 125).